The following is a 192-amino-acid chain: MIDVPHEVIEKLQIFQDLVQKWNKAINLISENSTQNFWKRHILDSLQLIQYINDKEIHLVDIGSGAGFPGIILSIAGVASTSLIEADLRKCIFLEKAAKISNNNIQIINQRIEKTEISCNILTCRAFSNLNTIFDCTKNISVQNKFLLPKGKSYLSEIKEARKKWLFKCLINQSITSKESKILEISDLTKII.

Residues Gly-63, Phe-68, 112-113, and Arg-125 each bind S-adenosyl-L-methionine; that span reads IE.

This sequence belongs to the methyltransferase superfamily. RNA methyltransferase RsmG family.

The protein resides in the cytoplasm. The catalysed reaction is guanosine(527) in 16S rRNA + S-adenosyl-L-methionine = N(7)-methylguanosine(527) in 16S rRNA + S-adenosyl-L-homocysteine. In terms of biological role, specifically methylates the N7 position of guanine in position 527 of 16S rRNA. In Rickettsia bellii (strain OSU 85-389), this protein is Ribosomal RNA small subunit methyltransferase G.